We begin with the raw amino-acid sequence, 463 residues long: UDP-N-acetylmuramate--L-alanine ligase (463 aa).

Residue 112 to 118 coordinates ATP; the sequence is GTHGKTT.

Belongs to the MurCDEF family.

It localises to the cytoplasm. It catalyses the reaction UDP-N-acetyl-alpha-D-muramate + L-alanine + ATP = UDP-N-acetyl-alpha-D-muramoyl-L-alanine + ADP + phosphate + H(+). Its pathway is cell wall biogenesis; peptidoglycan biosynthesis. Functionally, cell wall formation. The protein is UDP-N-acetylmuramate--L-alanine ligase of Dechloromonas aromatica (strain RCB).